A 130-amino-acid polypeptide reads, in one-letter code: UPF0102 protein RPE_0358 (130 aa).

This sequence belongs to the UPF0102 family.

In Rhodopseudomonas palustris (strain BisA53), this protein is UPF0102 protein RPE_0358.